The sequence spans 479 residues: Adenosylhomocysteinase (479 aa).

Substrate-binding residues include Thr56, Asp133, and Glu199. 200–202 (TTT) provides a ligand contact to NAD(+). Residues Lys229 and Asp233 each coordinate substrate. Residues Asn234, 263–268 (GYGDVG), Glu286, Asn321, 342–344 (IGH), and Asn390 each bind NAD(+).

Belongs to the adenosylhomocysteinase family. Homotetramer. It depends on NAD(+) as a cofactor.

It catalyses the reaction S-adenosyl-L-homocysteine + H2O = L-homocysteine + adenosine. The protein operates within amino-acid biosynthesis; L-homocysteine biosynthesis; L-homocysteine from S-adenosyl-L-homocysteine: step 1/1. Functionally, adenosylhomocysteine is a competitive inhibitor of S-adenosyl-L-methionine-dependent methyl transferase reactions; therefore adenosylhomocysteinase may play a key role in the control of methylations via regulation of the intracellular concentration of adenosylhomocysteine. This is Adenosylhomocysteinase from Plasmodium chabaudi chabaudi.